Reading from the N-terminus, the 152-residue chain is Deoxyuridine 5'-triphosphate nucleotidohydrolase (152 aa).

Residues 71-73 (RSG), asparagine 84, 88-90 (LID), and lysine 98 each bind substrate.

This sequence belongs to the dUTPase family. Mg(2+) serves as cofactor.

The enzyme catalyses dUTP + H2O = dUMP + diphosphate + H(+). Its pathway is pyrimidine metabolism; dUMP biosynthesis; dUMP from dCTP (dUTP route): step 2/2. Functionally, this enzyme is involved in nucleotide metabolism: it produces dUMP, the immediate precursor of thymidine nucleotides and it decreases the intracellular concentration of dUTP so that uracil cannot be incorporated into DNA. The polypeptide is Deoxyuridine 5'-triphosphate nucleotidohydrolase (Legionella pneumophila (strain Paris)).